The chain runs to 277 residues: Anamorsin homolog (277 aa).

The segment at Met-1–Lys-160 is N-terminal SAM-like domain. The tract at residues Ser-161–Leu-188 is linker. Cys-199, Cys-208, Cys-211, and Cys-213 together coordinate [2Fe-2S] cluster. The tract at residues Cys-199 to Cys-213 is fe-S binding site A. Positions 238, 241, 249, and 252 each coordinate [4Fe-4S] cluster. 2 short sequence motifs (cx2C motif) span residues Cys-238 to Cys-241 and Cys-249 to Cys-252. Residues Cys-238–Cys-252 form a fe-S binding site B region.

The protein belongs to the anamorsin family. In terms of assembly, monomer. The cofactor is [2Fe-2S] cluster. [4Fe-4S] cluster serves as cofactor.

It is found in the cytoplasm. The protein localises to the mitochondrion intermembrane space. Functionally, component of the cytosolic iron-sulfur (Fe-S) protein assembly (CIA) machinery. Required for the maturation of extramitochondrial Fe-S proteins. Part of an electron transfer chain functioning in an early step of cytosolic Fe-S biogenesis, facilitating the de novo assembly of a [4Fe-4S] cluster on the cytosolic Fe-S scaffold complex. Electrons are transferred from NADPH via a FAD- and FMN-containing diflavin oxidoreductase. Together with the diflavin oxidoreductase, also required for the assembly of the diferric tyrosyl radical cofactor of ribonucleotide reductase (RNR), probably by providing electrons for reduction during radical cofactor maturation in the catalytic small subunit. The chain is Anamorsin homolog from Populus trichocarpa (Western balsam poplar).